We begin with the raw amino-acid sequence, 355 residues long: MTGERGLTYAEAGVDIDAGNAMVEAIKPLVRSTRRPGADAEIGGFGGLFDLKAAGFKDPILVAANDGVGTKVKIAIETGRHDTIGIDLVAMCVNDIVVQGAEPLFFLDYYATGKLVPGVGADIVRGIAEGCRQAGCALIGGETAEMPGLYDGSDYDLAGFSVGAAERGALLPRPGIAPGDLVLGLPSSGVHSNGFSLVRRIVAASGLGWDAPAPFAPGRSLGEALLTPTRIYVRPLLAALKATGAGAIKALAHITGGGFPDNLPRVLPEGVGIALDLDEIAVPPVFGWLARTGKVAEAEMLRTFNCGIGMVVVVAADRIASVEAALREAGEAPVRLGRITPRGEAPVTFSGSLAL.

The protein belongs to the AIR synthase family.

The protein resides in the cytoplasm. It carries out the reaction 2-formamido-N(1)-(5-O-phospho-beta-D-ribosyl)acetamidine + ATP = 5-amino-1-(5-phospho-beta-D-ribosyl)imidazole + ADP + phosphate + H(+). It participates in purine metabolism; IMP biosynthesis via de novo pathway; 5-amino-1-(5-phospho-D-ribosyl)imidazole from N(2)-formyl-N(1)-(5-phospho-D-ribosyl)glycinamide: step 2/2. The polypeptide is Phosphoribosylformylglycinamidine cyclo-ligase (Methylobacterium nodulans (strain LMG 21967 / CNCM I-2342 / ORS 2060)).